The chain runs to 473 residues: H(+)/Cl(-) exchange transporter ClcA (473 aa).

Over 1 to 32 the chain is Cytoplasmic; the sequence is MKTDTPSLETPQAARLRRRQLIRQLLERDKTP. A helical membrane pass occupies residues 33–69; it reads LAILFMAAVVGTLVGLAAVAFDKGVAWLQNQRMGALV. The Periplasmic segment spans residues 70-76; that stretch reads HTADNYP. The chain crosses the membrane as a helical span at residues 77 to 100; sequence LLLTVAFLCSAVLAMFGYFLVRKY. The Selectivity filter part_1 motif lies at 106–110; that stretch reads GSGIP. A chloride-binding site is contributed by serine 107. An intramembrane region (helical) is located at residues 109–116; it reads IPEIEGAL. At 117–123 the chain is on the cytoplasmic side; that stretch reads EDQRPVR. Transmembrane regions (helical) follow at residues 124–141 and 148–166; these read WWRV…TLGG and EGPT…LDVF. The Selectivity filter part_2 motif lies at 146-150; that stretch reads GREGP. Residues 167-176 are Cytoplasmic-facing; sequence RLKGDEARHT. 2 intramembrane regions (helical) span residues 177 to 189 and 193 to 201; these read LLAT…LAAA and PLAGILFII. Topologically, residues 202–214 are cytoplasmic; it reads EEMRPQFRYTLIS. The helical transmembrane segment at 215-232 threads the bilayer; the sequence is IKAVFIGVIMSTIMYRIF. Over 233–252 the chain is Periplasmic; it reads NHEVALIDVGKLSDAPLNTL. Residues 253–281 form a helical membrane-spanning segment; the sequence is WLYLILGIIFGIFGPIFNKWVLGMQDLLH. At 282-287 the chain is on the cytoplasmic side; the sequence is RVHGGN. A helical membrane pass occupies residues 288–309; the sequence is ITKWVLMGGAIGGLCGLLGFVA. At 310–329 the chain is on the periplasmic side; the sequence is PATSGGGFNLIPIATAGNFS. 2 consecutive transmembrane segments (helical) span residues 330-349 and 355-376; these read MGML…LCFS and GIFA…MVAV. The short motif at 355 to 359 is the Selectivity filter part_3 element; sequence GIFAP. The chloride site is built by isoleucine 356 and phenylalanine 357. Over 377-386 the chain is Periplasmic; that stretch reads ELFPQYHLEA. The segment at residues 387-401 is an intramembrane region (helical); sequence GTFAIAGMGALLAAS. Residues 402–404 constitute an intramembrane region (note=Loop between two helices); sequence IRA. The segment at residues 405–416 is an intramembrane region (helical); sequence PLTGIILVLEMT. The note=Loop between two helices intramembrane region spans 417 to 421; the sequence is DNYQL. Residues 422–438 traverse the membrane as a helical segment; the sequence is ILPMIITGLGATLLAQF. Residues 439-473 lie on the Cytoplasmic side of the membrane; sequence TGGKPLYSAILARTLAKQEAEQLARSKAASARENT. Tyrosine 445 lines the chloride pocket.

The protein belongs to the chloride channel (TC 2.A.49) family. ClcA subfamily. In terms of assembly, homodimer.

It localises to the cell inner membrane. It carries out the reaction 2 chloride(in) + H(+)(out) = 2 chloride(out) + H(+)(in). Functionally, proton-coupled chloride transporter. Functions as antiport system and exchanges two chloride ions for 1 proton. Probably acts as an electrical shunt for an outwardly-directed proton pump that is linked to amino acid decarboxylation, as part of the extreme acid resistance (XAR) response. This Escherichia coli O45:K1 (strain S88 / ExPEC) protein is H(+)/Cl(-) exchange transporter ClcA.